A 442-amino-acid chain; its full sequence is Protein IQ-DOMAIN 33 (442 aa).

One can recognise an IQ domain in the interval 159–188; sequence EEDAAVIIQSAFRSYLAIRRSKEEEETFAK. Residues 184–212 form a disordered region; sequence ETFAKEESFSGEESQDNASMGTSLEAQTG. The segment covering 199 to 212 has biased composition (polar residues); it reads DNASMGTSLEAQTG. Residues 270–282 are calmodulin-binding; the sequence is RERALAYAFSQQL. Positions 375–442 are disordered; sequence EKSSFKPSIS…ETSHKLNSST (68 aa). A compositionally biased stretch (basic residues) spans 383 to 402; it reads ISKRKSVPSYKSQRKHHKLQ. Residues 385 to 392 carry the Nuclear localization signal motif; that stretch reads KRKSVPSY.

Belongs to the IQD family. As to quaternary structure, binds to multiple calmodulin (CaM) in the presence of Ca(2+) and CaM-like proteins.

The protein localises to the nucleus. Its function is as follows. May be involved in cooperative interactions with calmodulins or calmodulin-like proteins. Recruits calmodulin proteins to microtubules, thus being a potential scaffold in cellular signaling and trafficking. May associate with nucleic acids and regulate gene expression at the transcriptional or post-transcriptional level. This is Protein IQ-DOMAIN 33 from Arabidopsis thaliana (Mouse-ear cress).